A 374-amino-acid chain; its full sequence is Putative glutamate--cysteine ligase 2 (374 aa).

The protein belongs to the glutamate--cysteine ligase type 2 family. YbdK subfamily.

The enzyme catalyses L-cysteine + L-glutamate + ATP = gamma-L-glutamyl-L-cysteine + ADP + phosphate + H(+). In terms of biological role, ATP-dependent carboxylate-amine ligase which exhibits weak glutamate--cysteine ligase activity. This is Putative glutamate--cysteine ligase 2 from Paracidovorax citrulli (strain AAC00-1) (Acidovorax citrulli).